Reading from the N-terminus, the 234-residue chain is Thymidylate kinase (234 aa).

ATP is bound at residue 20–27 (GIDASGKT).

It belongs to the thymidylate kinase family.

It carries out the reaction dTMP + ATP = dTDP + ADP. Its function is as follows. Phosphorylation of dTMP to form dTDP in both de novo and salvage pathways of dTTP synthesis. The polypeptide is Thymidylate kinase (Mycoplasmopsis pulmonis (strain UAB CTIP) (Mycoplasma pulmonis)).